Here is a 240-residue protein sequence, read N- to C-terminus: RING finger protein 151 (240 aa).

The segment at C20–R58 adopts an RING-type zinc-finger fold. Residues G101–A156 form a TRAF-type zinc finger.

This is RING finger protein 151 (RNF151) from Bos taurus (Bovine).